Reading from the N-terminus, the 269-residue chain is Type II iodothyronine deiodinase (269 aa).

Residues 1–9 (MGILSVDLL) lie on the Lumenal side of the membrane. A helical; Signal-anchor for type III membrane protein membrane pass occupies residues 10–34 (ITLQILPVFFSNCLFLALYDSVILL). Over 35–269 (KHVVLLLSRS…KNFSKRUKLD (235 aa)) the chain is Cytoplasmic. Positions 83-103 (NSSVVHVSSPEGGDTSGNGAQ) are disordered. Residue Sec133 is part of the active site. Residues Sec133 and Sec266 are each a non-standard amino acid (selenocysteine).

Belongs to the iodothyronine deiodinase family. Predominantly monomer. Can form homodimers but homodimerization is not essential for enzyme activity. Interacts with USP20 and USP33. Interacts with MARCHF6. Ubiquitinated by MARCHF6, leading to its degradation by the proteasome. Deubiquitinated by USP20 and USP33. As to expression, highly expressed in thyroid, mammary and pituitary glands, then in hypothalamus. Low levels detected in diaphragm, heart, kidney and lung.

It is found in the endoplasmic reticulum membrane. It carries out the reaction 3,3',5-triiodo-L-thyronine + iodide + A + H(+) = L-thyroxine + AH2. The catalysed reaction is 3,3'-diiodo-L-thyronine + iodide + A + H(+) = 3,3',5'-triiodo-L-thyronine + AH2. It catalyses the reaction 3'-iodo-L-thyronine + iodide + A + H(+) = 3',5'-diiodo-L-thyronine + AH2. The enzyme catalyses 3,3'-diiodothyronamine + iodide + A + H(+) = 3,3',5'-triiodothyronamine + AH2. It carries out the reaction 3'-iodothyronamine + iodide + A + H(+) = 3',5'-diiodothyronamine + AH2. Its function is as follows. Plays a crucial role in the metabolism of thyroid hormones (TH) and has specific roles in TH activation and inactivation by deiodination. Catalyzes the deiodination of L-thyroxine (T4) to 3,5,3'-triiodothyronine (T3), 3,3',5'-triiodothyronine (rT3) to 3,3'-diiodothyronine (3,3'-T2) and 3',5'-diiodothyronine (3',5'-T2) to 3'-monoiodothyronine (3'-T1) via outer-ring deiodination (ORD). Catalyzes the phenolic ring deiodinations of 3,3',5'-triiodothyronamine and 3',5'- diiodothyronamine. This Bos taurus (Bovine) protein is Type II iodothyronine deiodinase (DIO2).